Consider the following 267-residue polypeptide: Ubiquinone biosynthesis protein COQ4, mitochondrial (267 aa).

A mitochondrion-targeting transit peptide spans 1-17 (MSRLKIPSQLLRGGRGF). Histidine 153, aspartate 154, histidine 157, and glutamate 169 together coordinate Zn(2+).

The protein belongs to the COQ4 family. In terms of assembly, component of a multi-subunit COQ enzyme complex, composed of at least COQ3, COQ4, COQ5, COQ6, COQ7 and COQ9. Requires Zn(2+) as cofactor.

It is found in the mitochondrion inner membrane. The catalysed reaction is a 4-hydroxy-3-methoxy-5-(all-trans-polyprenyl)benzoate + H(+) = a 2-methoxy-6-(all-trans-polyprenyl)phenol + CO2. The protein operates within cofactor biosynthesis; ubiquinone biosynthesis. Its function is as follows. Lyase that catalyzes the C1-decarboxylation of 4-hydroxy-3-methoxy-5-(all-trans-polyprenyl)benzoic acid into 2-methoxy-6-(all-trans-polyprenyl)phenol during ubiquinone biosynthesis. The chain is Ubiquinone biosynthesis protein COQ4, mitochondrial from Arthroderma otae (strain ATCC MYA-4605 / CBS 113480) (Microsporum canis).